A 143-amino-acid chain; its full sequence is Fluoride-specific ion channel FluC (143 aa).

Transmembrane regions (helical) follow at residues 3 to 23, 41 to 61, 76 to 96, and 103 to 123; these read AVVW…GSGL, WGTL…LIWL, IVGL…CLVF, and LMVG…VFLG. Positions 81 and 84 each coordinate Na(+).

This sequence belongs to the fluoride channel Fluc/FEX (TC 1.A.43) family.

It localises to the cell inner membrane. It carries out the reaction fluoride(in) = fluoride(out). Its activity is regulated as follows. Na(+) is not transported, but it plays an essential structural role and its presence is essential for fluoride channel function. In terms of biological role, fluoride-specific ion channel. Important for reducing fluoride concentration in the cell, thus reducing its toxicity. The sequence is that of Fluoride-specific ion channel FluC from Xylella fastidiosa (strain 9a5c).